The chain runs to 89 residues: Sec-independent protein translocase protein TatA (89 aa).

A helical membrane pass occupies residues 1–21 (MGGISIWQLLIIAVIVVLLFG). The interval 65 to 89 (ADKQADTNQEQAKTEDAKRHDKEQV) is disordered. Residues 76-89 (AKTEDAKRHDKEQV) show a composition bias toward basic and acidic residues.

It belongs to the TatA/E family. The Tat system comprises two distinct complexes: a TatABC complex, containing multiple copies of TatA, TatB and TatC subunits, and a separate TatA complex, containing only TatA subunits. Substrates initially bind to the TatABC complex, which probably triggers association of the separate TatA complex to form the active translocon.

The protein resides in the cell inner membrane. In terms of biological role, part of the twin-arginine translocation (Tat) system that transports large folded proteins containing a characteristic twin-arginine motif in their signal peptide across membranes. TatA could form the protein-conducting channel of the Tat system. This is Sec-independent protein translocase protein TatA from Shigella flexneri.